Reading from the N-terminus, the 212-residue chain is Large ribosomal subunit protein uL3 (212 aa).

A disordered region spans residues 127-161; that stretch reads NFKRGPMAHGSKNHRLPGSTGAGTTPGRVFPGKRM.

It belongs to the universal ribosomal protein uL3 family. As to quaternary structure, part of the 50S ribosomal subunit. Forms a cluster with proteins L14 and L19.

Its function is as follows. One of the primary rRNA binding proteins, it binds directly near the 3'-end of the 23S rRNA, where it nucleates assembly of the 50S subunit. The sequence is that of Large ribosomal subunit protein uL3 from Thermosynechococcus vestitus (strain NIES-2133 / IAM M-273 / BP-1).